Reading from the N-terminus, the 276-residue chain is MIGKKSFQTNVYRMSKFDTYIFNNLYINDYKMFWIDSGIAKLIDKNCLVSYEINSSSIILLKKNSIQRFSLTSLSDENINVSVITISDSFIRSLKSYILGDLMIRNLYSENKDLLLWNCEHNDIAVLSEVVNGFREINYSDEFLKVFFSGFFSKVEKKYNSIFITDDLDAMEKISCLVKSDITRNWRWADICGELRTNRMILKKELESRGVKFRELINSIRISYSISLMKTGEFKIKQIAYQSGFASVSYFSTVFKSTMNVAPSEYLFMLTGVAEK.

Residues 172–269 (EKISCLVKSD…NVAPSEYLFM (98 aa)) enclose the HTH araC/xylS-type domain. 2 DNA-binding regions (H-T-H motif) span residues 189–210 (ADIC…ESRG) and 236–259 (IKQI…KSTM).

The protein resides in the cytoplasm. In terms of biological role, probable regulatory protein for the tcp operon. This is TCP pilus virulence regulatory protein (tcpN) from Vibrio cholerae serotype O1 (strain ATCC 39541 / Classical Ogawa 395 / O395).